We begin with the raw amino-acid sequence, 400 residues long: NADH dehydrogenase-like protein Rv1812c (400 aa).

This sequence belongs to the NADH dehydrogenase family. Requires FAD as cofactor.

This Mycobacterium tuberculosis (strain ATCC 25618 / H37Rv) protein is NADH dehydrogenase-like protein Rv1812c.